A 1315-amino-acid chain; its full sequence is Activating molecule in BECN1-regulated autophagy protein 1A (1315 aa).

3 WD repeats span residues 50-89 (DSPRSTFLLAFSPDRSLMASTHVNHNIYITEVKSGKCVHS), 92-132 (GHRR…ESWL), and 134-174 (ESNS…TVVK). Disordered regions lie at residues 294 to 322 (RVPSPPDEDPSDSASLEAQAHTFSSARTE), 342 to 409 (FSSV…QRTG), 426 to 463 (FQSPVYTSASDRWGSTPGTSSSRHRPPEEEGQSSSSSI), 502 to 526 (NNNMDPEQPGPSHYQSPYSGENPPH), 545 to 610 (SRRW…DTGQ), 630 to 660 (VYRQSASSRSANISQGALNQEMPEDTPDNDY), 681 to 736 (RDSV…PRNA), 985 to 1134 (HSDG…STGQ), 1181 to 1208 (GSQTGADAQNRTRLSPIPGPSSGAPESL), and 1286 to 1315 (LLSSSPSLSPVNNSNYSNSDSSYLGDEYGR). Polar residues predominate over residues 351–360 (NMRNHSSSSG). Residues 378–388 (PGREGGGRHPG) are compositionally biased toward basic and acidic residues. Composition is skewed to polar residues over residues 394–409 (SGLNGQSSSMTPQRTG) and 426–435 (FQSPVYTSAS). Polar residues-rich tracts occupy residues 552 to 581 (GQPSSTERNTPWQPSSSAFHSVAPVSQSNE) and 633 to 647 (QSASSRSANISQGAL). Over residues 696 to 715 (RPLSSNPSSLSPSPVPNAES) the composition is skewed to low complexity. A compositionally biased stretch (acidic residues) spans 716–725 (SEVDFEEFEE). The span at 1009-1021 (PSSSRSGDRAGSS) shows a compositional bias: low complexity. Over residues 1022–1031 (RTDRRSRRDI) the composition is skewed to basic and acidic residues. Residues 1047–1060 (SVTSQGTQTQNQRL) show a composition bias toward polar residues. 2 short sequence motifs (TQT motif) span residues 1053–1055 (TQT) and 1065–1067 (TQT). Basic and acidic residues predominate over residues 1061-1072 (QHAETQTDRDLP). The segment covering 1076 to 1090 (QQPSTSQGSQVTDAT) has biased composition (polar residues). Residues 1091-1103 (ESLDFETLPEDSG) are compositionally biased toward acidic residues. Composition is skewed to polar residues over residues 1125–1134 (SEPSTDSTGQ) and 1181–1193 (GSQTGADAQNRTR). The span at 1286-1307 (LLSSSPSLSPVNNSNYSNSDSS) shows a compositional bias: low complexity.

This sequence belongs to the WD repeat AMBRA1 family. Component of the DCX(AMBRA1) E3 ubiquitin ligase complex.

It localises to the endoplasmic reticulum. It is found in the cytoplasm. The protein resides in the cytoskeleton. Its subcellular location is the cytoplasmic vesicle. The protein localises to the autophagosome. It localises to the mitochondrion. It is found in the cytosol. The protein resides in the nucleus. Its subcellular location is the cell junction. The protein localises to the focal adhesion. The protein operates within protein modification; protein ubiquitination. Functionally, substrate-recognition component of a DCX (DDB1-CUL4-X-box) E3 ubiquitin-protein ligase complex involved in cell cycle control and autophagy. The DCX(AMBRA1) complex specifically mediates the polyubiquitination of target proteins. Acts as an upstream master regulator of the transition from G1 to S cell phase: ambra1a specifically recognizes and binds phosphorylated cyclin-D (ccnd1, ccnd2 and ccnd3), leading to cyclin-D ubiquitination by the DCX(AMBRA1) complex and subsequent degradation. Acts as a regulator of Cul5-RING (CRL5) E3 ubiquitin-protein ligase complexes by mediating ubiquitination and degradation of Elongin-C (eloc) component of CRL5 complexes. Acts as a key regulator of autophagy by modulating the BECN1-PIK3C3 complex: controls protein turnover during neuronal development, and regulates normal cell survival and proliferation. In normal conditions, ambra1a is tethered to the cytoskeleton via interaction with dyneins light chains. Upon autophagy induction, ambra1a is released from the cytoskeletal docking site to induce autophagosome nucleation by mediating ubiquitination of proteins involved in autophagy. Also acts as an activator of mitophagy. Required for skeletal muscle development. The polypeptide is Activating molecule in BECN1-regulated autophagy protein 1A (Danio rerio (Zebrafish)).